The following is a 622-amino-acid chain: Low affinity potassium transport system protein Kup (622 aa).

Helical transmembrane passes span leucine 9–leucine 29, valine 49–leucine 69, valine 103–isoleucine 123, proline 137–isoleucine 157, valine 165–leucine 185, valine 213–alanine 233, tryptophan 247–leucine 267, proline 276–alanine 296, isoleucine 337–phenylalanine 357, leucine 363–threonine 383, phenylalanine 396–leucine 416, and leucine 419–threonine 439.

Belongs to the HAK/KUP transporter (TC 2.A.72) family.

It is found in the cell inner membrane. The catalysed reaction is K(+)(in) + H(+)(in) = K(+)(out) + H(+)(out). Functionally, responsible for the low-affinity transport of potassium into the cell. Likely operates as a K(+):H(+) symporter. This is Low affinity potassium transport system protein Kup from Salmonella paratyphi B (strain ATCC BAA-1250 / SPB7).